Consider the following 196-residue polypeptide: Phosphoheptose isomerase (196 aa).

The region spanning Val-31–Val-196 is the SIS domain. Asn-46 to Gly-48 is a substrate binding site. Zn(2+) contacts are provided by His-55 and Glu-59. Residues Glu-59, Asn-88–Asp-89, Ser-114–Ser-116, Ser-119, and Gln-166 each bind substrate. Residues Gln-166 and His-174 each coordinate Zn(2+).

The protein belongs to the SIS family. GmhA subfamily. Zn(2+) serves as cofactor.

Its subcellular location is the cytoplasm. The enzyme catalyses 2 D-sedoheptulose 7-phosphate = D-glycero-alpha-D-manno-heptose 7-phosphate + D-glycero-beta-D-manno-heptose 7-phosphate. It participates in carbohydrate biosynthesis; D-glycero-D-manno-heptose 7-phosphate biosynthesis; D-glycero-alpha-D-manno-heptose 7-phosphate and D-glycero-beta-D-manno-heptose 7-phosphate from sedoheptulose 7-phosphate: step 1/1. Catalyzes the isomerization of sedoheptulose 7-phosphate in D-glycero-D-manno-heptose 7-phosphate. The chain is Phosphoheptose isomerase from Crocosphaera subtropica (strain ATCC 51142 / BH68) (Cyanothece sp. (strain ATCC 51142)).